Here is a 292-residue protein sequence, read N- to C-terminus: uncharacterized protein (292 aa).

It belongs to the glycosyltransferase 2 family. WaaE/KdtX subfamily.

This is an uncharacterized protein from Rickettsia typhi (strain ATCC VR-144 / Wilmington).